The following is a 143-amino-acid chain: Transcriptional regulator SlyA (143 aa).

One can recognise an HTH marR-type domain in the interval 2 to 135; sequence ESTLGSDLAR…LSGLIDKLEK (134 aa). The segment at residues 49 to 72 is a DNA-binding region (H-T-H motif); the sequence is QIQLAKAIGIEQPSLVRTLDQLEE.

Belongs to the SlyA family. In terms of assembly, homodimer.

Transcription regulator that can specifically activate or repress expression of target genes. The sequence is that of Transcriptional regulator SlyA from Yersinia pestis (strain Pestoides F).